The chain runs to 115 residues: Aspartate 1-decarboxylase (115 aa).

The active-site Schiff-base intermediate with substrate; via pyruvic acid is the S25. S25 carries the pyruvic acid (Ser) modification. Substrate is bound at residue T57. Y58 functions as the Proton donor in the catalytic mechanism. Residue 73 to 75 (GAA) participates in substrate binding.

This sequence belongs to the PanD family. In terms of assembly, heterooctamer of four alpha and four beta subunits. The cofactor is pyruvate. Is synthesized initially as an inactive proenzyme, which is activated by self-cleavage at a specific serine bond to produce a beta-subunit with a hydroxyl group at its C-terminus and an alpha-subunit with a pyruvoyl group at its N-terminus.

The protein localises to the cytoplasm. The catalysed reaction is L-aspartate + H(+) = beta-alanine + CO2. Its pathway is cofactor biosynthesis; (R)-pantothenate biosynthesis; beta-alanine from L-aspartate: step 1/1. Catalyzes the pyruvoyl-dependent decarboxylation of aspartate to produce beta-alanine. The protein is Aspartate 1-decarboxylase of Kosmotoga olearia (strain ATCC BAA-1733 / DSM 21960 / TBF 19.5.1).